The sequence spans 321 residues: Cytochrome c biogenesis protein CcsA (321 aa).

8 helical membrane-spanning segments follow: residues 17 to 37 (VVSI…FVGL), 48 to 68 (TFFC…HLPI), 71 to 91 (LYES…VPYF), 98 to 118 (LSTI…WGLL), 143 to 163 (MVSG…LLVI), 225 to 245 (ILSI…VWAN), 259 to 273 (TWAF…IYFH), and 286 to 306 (AIVA…VNLL).

Belongs to the CcmF/CycK/Ccl1/NrfE/CcsA family. In terms of assembly, may interact with Ccs1.

It is found in the plastid. Its subcellular location is the chloroplast thylakoid membrane. Functionally, required during biogenesis of c-type cytochromes (cytochrome c6 and cytochrome f) at the step of heme attachment. In Populus alba (White poplar), this protein is Cytochrome c biogenesis protein CcsA.